The primary structure comprises 1384 residues: ATP-dependent RNA helicase TDRD9 (1384 aa).

Residues 35 to 60 (EAPREEVQRSEEVPSEAPTAQAQDPV) are disordered. Positions 36–46 (APREEVQRSEE) are enriched in basic and acidic residues. Residues 144-310 (ISLIESNSVV…FAVPVQNKMN (167 aa)) enclose the Helicase ATP-binding domain. Residue 157–164 (GATGSGKS) participates in ATP binding. Positions 256 to 259 (DEVH) match the DEAH box motif. One can recognise a Helicase C-terminal domain in the interval 379–546 (SGAQFVSERS…VLKVKLLDMG (168 aa)). The Tudor domain maps to 946–1006 (HPHPDLVCLA…REIPCQLLEL (61 aa)).

The protein belongs to the DEAD box helicase family. DEAH subfamily. In terms of assembly, interacts with piRNA-associated proteins PIWIL1 and PIWIL4.

The protein localises to the cytoplasm. The protein resides in the nucleus. It carries out the reaction ATP + H2O = ADP + phosphate + H(+). In terms of biological role, ATP-binding RNA helicase which plays a central role during spermatogenesis by repressing transposable elements and preventing their mobilization, which is essential for the germline integrity. Acts via the piRNA metabolic process, which mediates the repression of transposable elements during meiosis by forming complexes composed of piRNAs and Piwi proteins and governs the methylation and subsequent repression of transposons. Acts downstream of piRNA biogenesis: exclusively required for transposon silencing in the nucleus, suggesting that it acts as a nuclear effector in the nucleus together with PIWIL4. The chain is ATP-dependent RNA helicase TDRD9 from Rattus norvegicus (Rat).